Consider the following 438-residue polypeptide: uncharacterized protein (438 aa).

12 consecutive transmembrane segments (helical) span residues 22-42, 59-79, 89-109, 137-157, 174-194, 237-257, 258-278, 292-312, 330-350, 356-376, 380-400, and 418-438; these read VSPI…GGFG, SAAL…AGLF, IVKG…MLIA, MVMA…TPWG, FFVP…FLAF, LIYL…LGTK, HPSV…YPNV, AITV…LSGT, MGGF…FVLS, FGMV…PVEI, SIMG…VLLV, and AVIT…ITIL.

The protein belongs to the CitM (TC 2.A.11) transporter family.

The protein resides in the cell membrane. Its function is as follows. Transports the free citrate anion. This is an uncharacterized protein from Bacillus subtilis (strain 168).